Here is a 365-residue protein sequence, read N- to C-terminus: tRNA(Met) cytidine acetate ligase (365 aa).

ATP contacts are provided by residues 7–20 (IAEF…HKYL), Gly96, Asn152, and Arg175.

It belongs to the TmcAL family.

The protein resides in the cytoplasm. It catalyses the reaction cytidine(34) in elongator tRNA(Met) + acetate + ATP = N(4)-acetylcytidine(34) in elongator tRNA(Met) + AMP + diphosphate. In terms of biological role, catalyzes the formation of N(4)-acetylcytidine (ac(4)C) at the wobble position of elongator tRNA(Met), using acetate and ATP as substrates. First activates an acetate ion to form acetyladenylate (Ac-AMP) and then transfers the acetyl group to tRNA to form ac(4)C34. In Streptococcus pneumoniae (strain JJA), this protein is tRNA(Met) cytidine acetate ligase.